Here is a 441-residue protein sequence, read N- to C-terminus: RUN domain-containing protein 3A (441 aa).

Residues 1-293 (MEASFVQTTM…LQLQLEEAAA (293 aa)) are interaction with RAP2A. The RUN domain maps to 52–184 (DDSSEEFVNF…IDFSFCLKGE (133 aa)). Thr210 bears the Phosphothreonine mark. Positions 211-234 (DEEERHSAESSTSEDNSPEHPYLP) are disordered. The residue at position 227 (Ser227) is a Phosphoserine. Residues 262–317 (YLEELVRLRESQLKDLEAENRRLQLQLEEAAAQNQREKRELEGVILELQEQLTGLI) are a coiled coil. Positions 367-379 (PLSAEASLSSDSQ) are enriched in polar residues. Residues 367 to 399 (PLSAEASLSSDSQRLGEGKRDEEPWGPIGKDPT) form a disordered region. Residues 380-389 (RLGEGKRDEE) are compositionally biased toward basic and acidic residues. 2 positions are modified to phosphoserine: Ser411 and Ser414.

The protein belongs to the RUNDC3 family. In terms of assembly, interacts with the GTP-bound form of RAP2A.

Its function is as follows. May act as an effector of RAP2A in neuronal cells. The sequence is that of RUN domain-containing protein 3A (RUNDC3A) from Bos taurus (Bovine).